Here is a 123-residue protein sequence, read N- to C-terminus: Small ribosomal subunit protein uS13 (123 aa).

Positions 96 to 123 (GLPVRGQRTKTNARTRKGPKKTVAGKKK) are disordered.

This sequence belongs to the universal ribosomal protein uS13 family. As to quaternary structure, part of the 30S ribosomal subunit. Forms a loose heterodimer with protein S19. Forms two bridges to the 50S subunit in the 70S ribosome.

In terms of biological role, located at the top of the head of the 30S subunit, it contacts several helices of the 16S rRNA. In the 70S ribosome it contacts the 23S rRNA (bridge B1a) and protein L5 of the 50S subunit (bridge B1b), connecting the 2 subunits; these bridges are implicated in subunit movement. Contacts the tRNAs in the A and P-sites. This chain is Small ribosomal subunit protein uS13, found in Nocardia farcinica (strain IFM 10152).